The primary structure comprises 660 residues: UvrABC system protein B (660 aa).

Residues 26–196 form the Helicase ATP-binding domain; that stretch reads DGIDEKKEHQ…ELNKGQFDVK (171 aa). ATP is bound at residue 39–46; it reads GVTGSGKT. The Beta-hairpin motif lies at 92–115; it reads YFDFYKPEAYIPKSDLYIEKTSKN. The region spanning 431 to 593 is the Helicase C-terminal domain; that stretch reads QIEDIYDHLK…IIPKTIVKPI (163 aa). The 36-residue stretch at 622-657 folds into the UVR domain; that stretch reads KKFIDQMVRKMTQLAKANKFEEAIEIRDYLIEIGIE.

The protein belongs to the UvrB family. Forms a heterotetramer with UvrA during the search for lesions. Interacts with UvrC in an incision complex.

The protein resides in the cytoplasm. Its function is as follows. The UvrABC repair system catalyzes the recognition and processing of DNA lesions. A damage recognition complex composed of 2 UvrA and 2 UvrB subunits scans DNA for abnormalities. Upon binding of the UvrA(2)B(2) complex to a putative damaged site, the DNA wraps around one UvrB monomer. DNA wrap is dependent on ATP binding by UvrB and probably causes local melting of the DNA helix, facilitating insertion of UvrB beta-hairpin between the DNA strands. Then UvrB probes one DNA strand for the presence of a lesion. If a lesion is found the UvrA subunits dissociate and the UvrB-DNA preincision complex is formed. This complex is subsequently bound by UvrC and the second UvrB is released. If no lesion is found, the DNA wraps around the other UvrB subunit that will check the other stand for damage. The polypeptide is UvrABC system protein B (Metamycoplasma arthritidis (strain 158L3-1) (Mycoplasma arthritidis)).